The following is a 255-amino-acid chain: Ribonuclease HII (255 aa).

The region spanning Arg72–Cys255 is the RNase H type-2 domain. The a divalent metal cation site is built by Asp78, Glu79, and Asp170.

This sequence belongs to the RNase HII family. Requires Mn(2+) as cofactor. Mg(2+) serves as cofactor.

It is found in the cytoplasm. It carries out the reaction Endonucleolytic cleavage to 5'-phosphomonoester.. Endonuclease that specifically degrades the RNA of RNA-DNA hybrids. This chain is Ribonuclease HII, found in Bacillus velezensis (strain DSM 23117 / BGSC 10A6 / LMG 26770 / FZB42) (Bacillus amyloliquefaciens subsp. plantarum).